The chain runs to 361 residues: MGANSFGRFFTLTTFGESRSAGVGAVIDGCPAGIPLCADDIQKELNRRKPGSSGPFSTKRNEDDICEILSGVFEGRTLGSPIAVLVRNKETSSKDYENLKDVYRPGHADYSYDLKYGHRDYRGGGRSSGRETIGRLIGGAVAKKMLEAFAIKDGKKTIEVQVRAEEIAGIKTSLPLKEDEALPEPIFEKLSALASNGDSAGCILSCSVLNVSEGLGSPVFGKLDAVLSQALMSIGAVKGIEIGGGFYSASITGSENNDISKNFSGGILGGISCNMDYPLNLNHENGRKDENTCQIDFRIAVKPVPSIKMNQASFNKKGEKCMLSVGGNHDICLFPRIVPVVEAMCYLVLADAFLVSKIERF.

Arginine 48 contacts NADP(+). Residues 126-128 (RSS), glycine 269, 302-306 (KPVPS), and asparagine 328 contribute to the FMN site.

This sequence belongs to the chorismate synthase family. Homotetramer. It depends on FMNH2 as a cofactor.

It carries out the reaction 5-O-(1-carboxyvinyl)-3-phosphoshikimate = chorismate + phosphate. Its pathway is metabolic intermediate biosynthesis; chorismate biosynthesis; chorismate from D-erythrose 4-phosphate and phosphoenolpyruvate: step 7/7. Its function is as follows. Catalyzes the anti-1,4-elimination of the C-3 phosphate and the C-6 proR hydrogen from 5-enolpyruvylshikimate-3-phosphate (EPSP) to yield chorismate, which is the branch point compound that serves as the starting substrate for the three terminal pathways of aromatic amino acid biosynthesis. This reaction introduces a second double bond into the aromatic ring system. This is Chorismate synthase from Treponema denticola (strain ATCC 35405 / DSM 14222 / CIP 103919 / JCM 8153 / KCTC 15104).